Reading from the N-terminus, the 203-residue chain is Putative 3-methyladenine DNA glycosylase (203 aa).

This sequence belongs to the DNA glycosylase MPG family.

This Staphylococcus saprophyticus subsp. saprophyticus (strain ATCC 15305 / DSM 20229 / NCIMB 8711 / NCTC 7292 / S-41) protein is Putative 3-methyladenine DNA glycosylase.